The following is a 330-amino-acid chain: MWGLKVVLLLPVMSSALYPEEILDTQWELWKKTYRKQYNSKVDEISRRLIWEKNLKHISIHNLEASLGVHTYELAMNHLGDMTSEEVVQKMTGLKVPPSHSRSNDTLYIPDWEGRTPDSIDYRKKGYVTPVKNQGQCGSCWAFSSVGALEGQLKKKTGKLLNLSPQNLVDCVSENDGCGGGYMTNAFQYVQKNRGIDSEDAYPYVGQDENCMYNPTGKAAKCRGYREIPEGNEKALKRAVARVGPVSVAIDASLTSFQFYSKGVYYDENCNSDNLNHAVLAVGYGIQKGKKHWIIKNSWGENWGNKGYILMARNKNNACGIANLASFPKM.

The first 16 residues, 1–16 (MWGLKVVLLLPVMSSA), serve as a signal peptide directing secretion. Residues 17–115 (LYPEEILDTQ…TLYIPDWEGR (99 aa)) constitute a propeptide, activation peptide. N-linked (GlcNAc...) asparagine glycosylation is present at Asn-104. 3 cysteine pairs are disulfide-bonded: Cys-137-Cys-178, Cys-171-Cys-211, and Cys-270-Cys-319. The active site involves Cys-140. Residues His-277 and Asn-297 contribute to the active site.

It belongs to the peptidase C1 family. Expressed in the thyroid epithelial cells.

It localises to the lysosome. The protein resides in the secreted. The protein localises to the apical cell membrane. It carries out the reaction Broad proteolytic activity. With small-molecule substrates and inhibitors, the major determinant of specificity is P2, which is preferably Leu, Met &gt; Phe, and not Arg.. Functionally, thiol protease involved in osteoclastic bone resorption and may participate partially in the disorder of bone remodeling. Displays potent endoprotease activity against fibrinogen at acid pH. May play an important role in extracellular matrix degradation. Involved in the release of thyroid hormone thyroxine (T4) by limited proteolysis of TG/thyroglobulin in the thyroid follicle lumen. The protein is Cathepsin K (CTSK) of Sus scrofa (Pig).